A 401-amino-acid polypeptide reads, in one-letter code: Adenosine 3'-phospho 5'-phosphosulfate transporter 2 (401 aa).

N-linked (GlcNAc...) asparagine glycans are attached at residues asparagine 12 and asparagine 71. A run of 6 helical transmembrane segments spans residues 78-98 (LTQF…YGYL), 114-134 (YLTL…LQLI), 147-167 (MIIA…LGYL), 170-190 (PTQV…GVFI), 196-216 (NVAD…FTLA), and 223-243 (NFNL…AVIG). Asparagine 254 is a glycosylation site (N-linked (GlcNAc...) asparagine). 4 helical membrane-spanning segments follow: residues 267-287 (IGFV…PAVT), 298-317 (GYAF…VLAL), 324-346 (LIAV…IFFA), and 349-369 (FTFQ…LNVY).

The protein belongs to the nucleotide-sugar transporter family. SLC35B subfamily. In terms of tissue distribution, preferentially and highly expressed in colon.

Its subcellular location is the golgi apparatus membrane. It catalyses the reaction 3'-phosphoadenylyl sulfate(in) + adenosine 3',5'-bisphosphate(out) = 3'-phosphoadenylyl sulfate(out) + adenosine 3',5'-bisphosphate(in). Probably functions as a 3'-phosphoadenylyl sulfate:adenosine 3',5'-bisphosphate antiporter at the Golgi membranes. Mediates the transport from the cytosol into the lumen of the Golgi of 3'-phosphoadenylyl sulfate/adenosine 3'-phospho 5'-phosphosulfate (PAPS), a universal sulfuryl donor for sulfation events that take place in that compartment. The chain is Adenosine 3'-phospho 5'-phosphosulfate transporter 2 from Homo sapiens (Human).